A 345-amino-acid chain; its full sequence is Phenylalanine--tRNA ligase alpha subunit (345 aa).

A Mg(2+)-binding site is contributed by glutamate 266.

This sequence belongs to the class-II aminoacyl-tRNA synthetase family. Phe-tRNA synthetase alpha subunit type 1 subfamily. In terms of assembly, tetramer of two alpha and two beta subunits. Requires Mg(2+) as cofactor.

Its subcellular location is the cytoplasm. The catalysed reaction is tRNA(Phe) + L-phenylalanine + ATP = L-phenylalanyl-tRNA(Phe) + AMP + diphosphate + H(+). This Burkholderia lata (strain ATCC 17760 / DSM 23089 / LMG 22485 / NCIMB 9086 / R18194 / 383) protein is Phenylalanine--tRNA ligase alpha subunit.